We begin with the raw amino-acid sequence, 39 residues long: Omega-theraphotoxin-Bs1b (39 aa).

3 disulfides stabilise this stretch: cysteine 4/cysteine 25, cysteine 8/cysteine 31, and cysteine 17/cysteine 36.

It belongs to the neurotoxin 12 (Hwtx-2) family. 06 (TXP1) subfamily. As to expression, expressed by the venom gland.

It is found in the secreted. Inhibits voltage-gated calcium channels (Cav) in rat cerebellar granule cells. Has insecticidal activity. This is Omega-theraphotoxin-Bs1b from Brachypelma smithi (Mexican red knee tarantula).